A 53-amino-acid chain; its full sequence is UPF0391 membrane protein Meso_3392 (53 aa).

A run of 2 helical transmembrane segments spans residues 4 to 24 (WILILLIVAAVAGLLGMHSLA) and 33 to 53 (ILIAIVLILFLLAVLGIIAIA).

Belongs to the UPF0391 family.

It localises to the cell membrane. In Chelativorans sp. (strain BNC1), this protein is UPF0391 membrane protein Meso_3392.